A 258-amino-acid polypeptide reads, in one-letter code: NAD kinase (258 aa).

The Proton acceptor role is filled by Asp44. Residues Asp44–Gly45, Asn116–Glu117, Asp146, Ala154, and Thr157–Ser162 each bind NAD(+).

It belongs to the NAD kinase family. A divalent metal cation serves as cofactor.

It is found in the cytoplasm. It catalyses the reaction NAD(+) + ATP = ADP + NADP(+) + H(+). Its function is as follows. Involved in the regulation of the intracellular balance of NAD and NADP, and is a key enzyme in the biosynthesis of NADP. Catalyzes specifically the phosphorylation on 2'-hydroxyl of the adenosine moiety of NAD to yield NADP. The sequence is that of NAD kinase from Zymomonas mobilis subsp. mobilis (strain ATCC 31821 / ZM4 / CP4).